The chain runs to 834 residues: Glycerol-3-phosphate acyltransferase (834 aa).

An HXXXXD motif motif is present at residues 309–314 (CHRSHI).

The protein belongs to the GPAT/DAPAT family.

It is found in the cell inner membrane. The enzyme catalyses sn-glycerol 3-phosphate + an acyl-CoA = a 1-acyl-sn-glycero-3-phosphate + CoA. It participates in phospholipid metabolism; CDP-diacylglycerol biosynthesis; CDP-diacylglycerol from sn-glycerol 3-phosphate: step 1/3. In Pseudomonas fluorescens (strain ATCC BAA-477 / NRRL B-23932 / Pf-5), this protein is Glycerol-3-phosphate acyltransferase.